A 399-amino-acid polypeptide reads, in one-letter code: Probable 2,3-bisphosphoglycerate-independent phosphoglycerate mutase (399 aa).

The protein belongs to the BPG-independent phosphoglycerate mutase family. A-PGAM subfamily.

The enzyme catalyses (2R)-2-phosphoglycerate = (2R)-3-phosphoglycerate. It functions in the pathway carbohydrate degradation; glycolysis; pyruvate from D-glyceraldehyde 3-phosphate: step 3/5. Its function is as follows. Catalyzes the interconversion of 2-phosphoglycerate and 3-phosphoglycerate. This Geobacter sulfurreducens (strain ATCC 51573 / DSM 12127 / PCA) protein is Probable 2,3-bisphosphoglycerate-independent phosphoglycerate mutase.